A 94-amino-acid polypeptide reads, in one-letter code: C-C motif chemokine 17 (94 aa).

The signal sequence occupies residues 1–23 (MAPLKMLALVTLLLGASLQHIHA). 2 cysteine pairs are disulfide-bonded: cysteine 33–cysteine 57 and cysteine 34–cysteine 73.

This sequence belongs to the intercrine beta (chemokine CC) family. In terms of tissue distribution, constitutively expressed in thymus. Detected at lower levels in the lung, colon and small intestine. Expressed in stimulated peripheral blood mononuclear cells, but not in resting cells.

The protein resides in the secreted. Functionally, chemokine, which displays chemotactic activity for T lymphocytes, preferentially Th2 cells, but not monocytes or granulocytes. Therefore plays an important role in a wide range of inflammatory and immunological processes. Acts by binding to CCR4 at T-cell surface. Mediates GM-CSF/CSF2-driven pain and inflammation. In the brain, required to maintain the typical, highly branched morphology of hippocampal microglia under homeostatic conditions. May be important for the appropriate adaptation of microglial morphology and synaptic plasticity to acute lipopolysaccharide (LPS)-induced neuroinflammation. Plays a role in wound healing, mainly by inducing fibroblast migration into the wound. This chain is C-C motif chemokine 17 (CCL17), found in Homo sapiens (Human).